Here is a 143-residue protein sequence, read N- to C-terminus: Transcriptional regulator MraZ (143 aa).

SpoVT-AbrB domains follow at residues 5–47 and 76–119; these read TYTP…PKEE and ADEQ…DAQA.

The protein belongs to the MraZ family. As to quaternary structure, forms oligomers.

It localises to the cytoplasm. The protein localises to the nucleoid. This is Transcriptional regulator MraZ from Corynebacterium glutamicum (strain R).